A 303-amino-acid polypeptide reads, in one-letter code: 4-hydroxy-tetrahydrodipicolinate synthase (303 aa).

Residue Thr57 participates in pyruvate binding. Residue Tyr143 is the Proton donor/acceptor of the active site. Lys171 serves as the catalytic Schiff-base intermediate with substrate. Ile211 is a pyruvate binding site.

The protein belongs to the DapA family. As to quaternary structure, homotetramer; dimer of dimers.

It is found in the cytoplasm. It carries out the reaction L-aspartate 4-semialdehyde + pyruvate = (2S,4S)-4-hydroxy-2,3,4,5-tetrahydrodipicolinate + H2O + H(+). Its pathway is amino-acid biosynthesis; L-lysine biosynthesis via DAP pathway; (S)-tetrahydrodipicolinate from L-aspartate: step 3/4. Functionally, catalyzes the condensation of (S)-aspartate-beta-semialdehyde [(S)-ASA] and pyruvate to 4-hydroxy-tetrahydrodipicolinate (HTPA). The chain is 4-hydroxy-tetrahydrodipicolinate synthase from Bifidobacterium animalis subsp. lactis (strain AD011).